Consider the following 88-residue polypeptide: Small ribosomal subunit protein uS15 (88 aa).

The protein belongs to the universal ribosomal protein uS15 family. Part of the 30S ribosomal subunit. Forms a bridge to the 50S subunit in the 70S ribosome, contacting the 23S rRNA.

One of the primary rRNA binding proteins, it binds directly to 16S rRNA where it helps nucleate assembly of the platform of the 30S subunit by binding and bridging several RNA helices of the 16S rRNA. Functionally, forms an intersubunit bridge (bridge B4) with the 23S rRNA of the 50S subunit in the ribosome. The protein is Small ribosomal subunit protein uS15 of Polaromonas sp. (strain JS666 / ATCC BAA-500).